Here is a 325-residue protein sequence, read N- to C-terminus: GMP reductase (325 aa).

Cysteine 174 (thioimidate intermediate) is an active-site residue. 203–226 (LIADGGIRTHGDIAKSIRFGASMV) contributes to the NADP(+) binding site.

Belongs to the IMPDH/GMPR family. GuaC type 2 subfamily.

It catalyses the reaction IMP + NH4(+) + NADP(+) = GMP + NADPH + 2 H(+). Functionally, catalyzes the irreversible NADPH-dependent deamination of GMP to IMP. It functions in the conversion of nucleobase, nucleoside and nucleotide derivatives of G to A nucleotides, and in maintaining the intracellular balance of A and G nucleotides. This chain is GMP reductase, found in Staphylococcus aureus (strain NCTC 8325 / PS 47).